Consider the following 177-residue polypeptide: Ribosome maturation factor RimM (177 aa).

The 75-residue stretch at 92 to 166 (EDTFYHADLM…RIVVVPDTNP (75 aa)) folds into the PRC barrel domain.

Belongs to the RimM family. Binds ribosomal protein uS19.

It is found in the cytoplasm. Functionally, an accessory protein needed during the final step in the assembly of 30S ribosomal subunit, possibly for assembly of the head region. Essential for efficient processing of 16S rRNA. May be needed both before and after RbfA during the maturation of 16S rRNA. It has affinity for free ribosomal 30S subunits but not for 70S ribosomes. The polypeptide is Ribosome maturation factor RimM (Azorhizobium caulinodans (strain ATCC 43989 / DSM 5975 / JCM 20966 / LMG 6465 / NBRC 14845 / NCIMB 13405 / ORS 571)).